The sequence spans 115 residues: Glutaredoxin 4 (115 aa).

Positions Ile-5–Tyr-107 constitute a Glutaredoxin domain. Lys-22 contacts glutathione. Cys-30 lines the [2Fe-2S] cluster pocket. Residues Arg-59, Phe-71, and Cys-84 to Asp-85 each bind glutathione.

The protein belongs to the glutaredoxin family. Monothiol subfamily. In terms of assembly, homodimer.

The protein resides in the cytoplasm. In terms of biological role, monothiol glutaredoxin involved in the biogenesis of iron-sulfur clusters. The protein is Glutaredoxin 4 (grxD) of Shigella flexneri.